The following is a 312-amino-acid chain: Acetyl-coenzyme A carboxylase carboxyl transferase subunit beta (312 aa).

A CoA carboxyltransferase N-terminal domain is found at 24 to 293; it reads LWIKCPDSGQ…PHADEVAAPP (270 aa). Residues 286 to 312 are disordered; the sequence is ADEVAAPPPPDVEGPPPAAEPVALPPA. Residues 291–312 show a composition bias toward pro residues; it reads APPPPDVEGPPPAAEPVALPPA.

This sequence belongs to the AccD/PCCB family. As to quaternary structure, acetyl-CoA carboxylase is a heterohexamer composed of biotin carboxyl carrier protein (AccB), biotin carboxylase (AccC) and two subunits each of ACCase subunit alpha (AccA) and ACCase subunit beta (AccD).

The protein resides in the cytoplasm. The catalysed reaction is N(6)-carboxybiotinyl-L-lysyl-[protein] + acetyl-CoA = N(6)-biotinyl-L-lysyl-[protein] + malonyl-CoA. It functions in the pathway lipid metabolism; malonyl-CoA biosynthesis; malonyl-CoA from acetyl-CoA: step 1/1. In terms of biological role, component of the acetyl coenzyme A carboxylase (ACC) complex. Biotin carboxylase (BC) catalyzes the carboxylation of biotin on its carrier protein (BCCP) and then the CO(2) group is transferred by the transcarboxylase to acetyl-CoA to form malonyl-CoA. In Afipia carboxidovorans (strain ATCC 49405 / DSM 1227 / KCTC 32145 / OM5) (Oligotropha carboxidovorans), this protein is Acetyl-coenzyme A carboxylase carboxyl transferase subunit beta.